Consider the following 845-residue polypeptide: Molybdenum cofactor sulfurase (845 aa).

Position 240 is an N6-(pyridoxal phosphate)lysine (Lys240). Cys404 is an active-site residue. The region spanning 666-840 (SFPQDSSPSS…LMVGDTVTPS (175 aa)) is the MOSC domain.

The protein belongs to the class-V pyridoxal-phosphate-dependent aminotransferase family. MOCOS subfamily. It depends on pyridoxal 5'-phosphate as a cofactor.

It catalyses the reaction Mo-molybdopterin + L-cysteine + AH2 = thio-Mo-molybdopterin + L-alanine + A + H2O. The protein operates within cofactor biosynthesis; molybdopterin biosynthesis. Sulfurates the molybdenum cofactor. Sulfation of molybdenum is essential for xanthine dehydrogenase (XDH) and aldehyde oxidase (ADO) enzymes in which molybdenum cofactor is liganded by 1 oxygen and 1 sulfur atom in active form. The chain is Molybdenum cofactor sulfurase from Aspergillus clavatus (strain ATCC 1007 / CBS 513.65 / DSM 816 / NCTC 3887 / NRRL 1 / QM 1276 / 107).